A 58-amino-acid chain; its full sequence is uncharacterized protein (58 aa).

It belongs to the ycf18/nblA family.

It is found in the plastid. The protein resides in the chloroplast. This is an uncharacterized protein from Porphyra purpurea (Red seaweed).